A 33-amino-acid polypeptide reads, in one-letter code: pyr operon leader peptide (33 aa).

This chain is pyr operon leader peptide (pyrL), found in Salmonella typhi.